We begin with the raw amino-acid sequence, 399 residues long: Acetate kinase (399 aa).

Mg(2+) is bound at residue asparagine 9. Residue lysine 16 participates in ATP binding. Position 90 (arginine 90) interacts with substrate. The Proton donor/acceptor role is filled by aspartate 147. Residues 207-211 (HLGNG), 281-283 (DFR), and 333-337 (GVGEN) contribute to the ATP site. Glutamate 387 is a Mg(2+) binding site.

Belongs to the acetokinase family. In terms of assembly, homodimer. It depends on Mg(2+) as a cofactor. Mn(2+) serves as cofactor.

It is found in the cytoplasm. The enzyme catalyses acetate + ATP = acetyl phosphate + ADP. It participates in metabolic intermediate biosynthesis; acetyl-CoA biosynthesis; acetyl-CoA from acetate: step 1/2. Its function is as follows. Catalyzes the formation of acetyl phosphate from acetate and ATP. Can also catalyze the reverse reaction. The protein is Acetate kinase of Mycobacterium sp. (strain JLS).